The sequence spans 282 residues: Bifunctional protein FolD (282 aa).

Residues 165 to 167 (GRS) and S190 contribute to the NADP(+) site.

This sequence belongs to the tetrahydrofolate dehydrogenase/cyclohydrolase family. In terms of assembly, homodimer.

It catalyses the reaction (6R)-5,10-methylene-5,6,7,8-tetrahydrofolate + NADP(+) = (6R)-5,10-methenyltetrahydrofolate + NADPH. The enzyme catalyses (6R)-5,10-methenyltetrahydrofolate + H2O = (6R)-10-formyltetrahydrofolate + H(+). It participates in one-carbon metabolism; tetrahydrofolate interconversion. Functionally, catalyzes the oxidation of 5,10-methylenetetrahydrofolate to 5,10-methenyltetrahydrofolate and then the hydrolysis of 5,10-methenyltetrahydrofolate to 10-formyltetrahydrofolate. The protein is Bifunctional protein FolD of Macrococcus caseolyticus (strain JCSC5402) (Macrococcoides caseolyticum).